The primary structure comprises 461 residues: Asparagine--tRNA ligase (461 aa).

Belongs to the class-II aminoacyl-tRNA synthetase family. In terms of assembly, homodimer.

It localises to the cytoplasm. The catalysed reaction is tRNA(Asn) + L-asparagine + ATP = L-asparaginyl-tRNA(Asn) + AMP + diphosphate + H(+). The sequence is that of Asparagine--tRNA ligase from Geobacter sulfurreducens (strain ATCC 51573 / DSM 12127 / PCA).